The following is a 164-amino-acid chain: Cell division protein SepF (164 aa).

Positions 21 to 71 (YQQGQQPAQQQQSPVQAVPTPAPAPQQQAKRAPVTPLHKPSTTTRNAAPAE) are disordered. A compositionally biased stretch (low complexity) spans 22–54 (QQGQQPAQQQQSPVQAVPTPAPAPQQQAKRAPV).

The protein belongs to the SepF family. In terms of assembly, homodimer. Interacts with FtsZ.

It is found in the cytoplasm. Cell division protein that is part of the divisome complex and is recruited early to the Z-ring. Probably stimulates Z-ring formation, perhaps through the cross-linking of FtsZ protofilaments. Its function overlaps with FtsA. This is Cell division protein SepF from Clavibacter michiganensis subsp. michiganensis (strain NCPPB 382).